A 386-amino-acid polypeptide reads, in one-letter code: Bifunctional enzyme IspD/IspF (386 aa).

Positions M1–I231 are 2-C-methyl-D-erythritol 4-phosphate cytidylyltransferase. The tract at residues R232–Q386 is 2-C-methyl-D-erythritol 2,4-cyclodiphosphate synthase. 2 residues coordinate a divalent metal cation: D238 and H240. 4-CDP-2-C-methyl-D-erythritol 2-phosphate contacts are provided by residues D238 to H240 and H264 to S265. H272 serves as a coordination point for a divalent metal cation. Residues D286–G288, T362–E365, Y369, and R372 each bind 4-CDP-2-C-methyl-D-erythritol 2-phosphate.

It in the N-terminal section; belongs to the IspD/TarI cytidylyltransferase family. IspD subfamily. The protein in the C-terminal section; belongs to the IspF family. The cofactor is a divalent metal cation.

It carries out the reaction 2-C-methyl-D-erythritol 4-phosphate + CTP + H(+) = 4-CDP-2-C-methyl-D-erythritol + diphosphate. It catalyses the reaction 4-CDP-2-C-methyl-D-erythritol 2-phosphate = 2-C-methyl-D-erythritol 2,4-cyclic diphosphate + CMP. Its pathway is isoprenoid biosynthesis; isopentenyl diphosphate biosynthesis via DXP pathway; isopentenyl diphosphate from 1-deoxy-D-xylulose 5-phosphate: step 2/6. The protein operates within isoprenoid biosynthesis; isopentenyl diphosphate biosynthesis via DXP pathway; isopentenyl diphosphate from 1-deoxy-D-xylulose 5-phosphate: step 4/6. Bifunctional enzyme that catalyzes the formation of 4-diphosphocytidyl-2-C-methyl-D-erythritol from CTP and 2-C-methyl-D-erythritol 4-phosphate (MEP) (IspD), and catalyzes the conversion of 4-diphosphocytidyl-2-C-methyl-D-erythritol 2-phosphate (CDP-ME2P) to 2-C-methyl-D-erythritol 2,4-cyclodiphosphate (ME-CPP) with a corresponding release of cytidine 5-monophosphate (CMP) (IspF). The protein is Bifunctional enzyme IspD/IspF of Desulfotalea psychrophila (strain LSv54 / DSM 12343).